Reading from the N-terminus, the 172-residue chain is R-phycocyanin-2 beta chain (172 aa).

Asn-72 is modified (N4-methylasparagine). Cys-82 is a binding site for (2R,3E)-phycocyanobilin. Cys-153 contributes to the (2R,3E)-phycoerythrobilin binding site.

The protein belongs to the phycobiliprotein family. As to quaternary structure, heterodimer of an alpha and a beta chain. Contains two covalently linked bilin chromophores.

It is found in the cellular thylakoid membrane. Functionally, light-harvesting photosynthetic bile pigment-protein from the phycobiliprotein complex. This is R-phycocyanin-2 beta chain (rpcB) from Synechococcus sp. (strain WH8020).